We begin with the raw amino-acid sequence, 317 residues long: Malate dehydrogenase (317 aa).

Residues 15 to 20 and aspartate 39 contribute to the NAD(+) site; that span reads GSGNIG. Residues arginine 88 and arginine 94 each contribute to the substrate site. NAD(+) contacts are provided by residues asparagine 101 and 124 to 126; that span reads VTN. The substrate site is built by asparagine 126 and arginine 157. The Proton acceptor role is filled by histidine 181.

Belongs to the LDH/MDH superfamily. MDH type 3 family.

The enzyme catalyses (S)-malate + NAD(+) = oxaloacetate + NADH + H(+). In terms of biological role, catalyzes the reversible oxidation of malate to oxaloacetate. The polypeptide is Malate dehydrogenase (Ehrlichia ruminantium (strain Gardel)).